A 288-amino-acid chain; its full sequence is Syntaxin-1A (288 aa).

At 1–265 (MKDRTQELRT…KYQSKARRKK (265 aa)) the chain is on the cytoplasmic side. Phosphoserine is present on residues serine 14, serine 64, and serine 95. Residues 68-109 (DEKTKEELEELMSDIKKTANKVRSKLKSIEQSIEQEEGLNRS) are a coiled coil. Serine 188 carries the post-translational modification Phosphoserine; by DAPK1. A t-SNARE coiled-coil homology domain is found at 192–254 (LSEIETRHSE…ERAVSDTKKA (63 aa)). Glycyl lysine isopeptide (Lys-Gly) (interchain with G-Cter in SUMO) cross-links involve residues lysine 252, lysine 253, and lysine 256. Residues 266–286 (IMIIICCVIPGIVIASTVGGI) traverse the membrane as a helical; Anchor for type IV membrane protein segment. Topologically, residues 287-288 (FA) are extracellular.

This sequence belongs to the syntaxin family. Part of the SNARE core complex containing SNAP25, VAMP2 and STX1A; this complex constitutes the basic catalytic machinery of the complex neurotransmitter release apparatus. The SNARE complex interacts with CPLX1. Interacts with STXBP1. The interaction with STXBP1 promotes assembly of the SNARE complex. Interacts (via C-terminus) with KCNB1 (via C-terminus); the interaction increases in a calcium-dependent manner and induces a pore-independent enhancement of exocytosis in neuroendocrine cells, chromaffin cells, pancreatic beta cells and from the soma of dorsal root ganglia (DRG) neurons. Interacts with SYTL4. Interacts with STXBP6. Interacts with PLCL1 (via C2 domain). Interacts with OTOF. Interacts with LGI3. Interacts (via the H3 domain) with SLC6A4 (via the N-terminus); this interaction regulates SLC4A6 channel conductance in thalamocortical neurons. Interacts with SYT6 and SYT8; the interaction is Ca(2+)-dependent. Interacts with VAMP8. Interacts with SNAP23. Interacts with VAPA and SYBU. Interacts with PRRT2. Interacts with SEPT8. Interacts with STXBP5L. Interacts with synaptotagmin-1/SYT1. Interacts with SEPTIN5; in the cerebellar cortex. Interacts with SEPTIN4; in the striatum. Post-translationally, phosphorylated by CK2. Phosphorylation at Ser-188 by DAPK1 significantly decreases its interaction with STXBP1. In terms of processing, sumoylated, sumoylation is required for regulation of synaptic vesicle endocytosis.

It is found in the cytoplasmic vesicle. The protein resides in the secretory vesicle. The protein localises to the synaptic vesicle membrane. It localises to the cell membrane. Its subcellular location is the synapse. It is found in the synaptosome. In terms of biological role, plays an essential role in hormone and neurotransmitter calcium-dependent exocytosis and endocytosis. Part of the SNARE (Soluble NSF Attachment Receptor) complex composed of SNAP25, STX1A and VAMP2 which mediates the fusion of synaptic vesicles with the presynaptic plasma membrane. STX1A and SNAP25 are localized on the plasma membrane while VAMP2 resides in synaptic vesicles. The pairing of the three SNAREs from the N-terminal SNARE motifs to the C-terminal anchors leads to the formation of the SNARE complex, which brings membranes into close proximity and results in final fusion. Participates in the calcium-dependent regulation of acrosomal exocytosis in sperm. Also plays an important role in the exocytosis of hormones such as insulin or glucagon-like peptide 1 (GLP-1). This Pongo abelii (Sumatran orangutan) protein is Syntaxin-1A (STX1A).